Reading from the N-terminus, the 413-residue chain is Methylaspartate ammonia-lyase (413 aa).

Gln172 is a binding site for (2S,3S)-3-methyl-L-aspartate. 3 residues coordinate Mg(2+): Asp238, Glu273, and Asp307. A (2S,3S)-3-methyl-L-aspartate-binding site is contributed by Gln329. Lys331 acts as the Proton acceptor in catalysis. (2S,3S)-3-methyl-L-aspartate is bound by residues 360–361 and Cys361; that span reads TC.

It belongs to the methylaspartate ammonia-lyase family. As to quaternary structure, homodimer. The cofactor is Mg(2+).

The enzyme catalyses (2S,3S)-3-methyl-L-aspartate = mesaconate + NH4(+). Its pathway is amino-acid degradation; L-glutamate degradation via mesaconate pathway; acetate and pyruvate from L-glutamate: step 2/4. Inhibited by calcium ions. Involved in the methylaspartate cycle. Catalyzes the formation of the alpha,beta-unsaturated bond by the reversible anti elimination of ammonia from L-threo-beta-methylaspartate (L-threo-(2S,3S)-3-methylaspartate) to give mesaconate. It can also use L-erythro-beta-methylaspartate (L-erythro-(2S,3R)-3-methylaspartate), L-aspartate, fumarate and ethylfumarate as substrates. This is Methylaspartate ammonia-lyase from Clostridium tetanomorphum.